A 60-amino-acid polypeptide reads, in one-letter code: Cytotoxin 2 (60 aa).

Intrachain disulfides connect Cys3–Cys21, Cys14–Cys38, Cys42–Cys53, and Cys54–Cys59.

It belongs to the three-finger toxin family. Short-chain subfamily. Type IA cytotoxin sub-subfamily. In terms of assembly, monomer in solution; Homodimer and oligomer in the presence of negatively charged lipids forming a pore with a size ranging between 20 and 30 Angstroms. Expressed by the venom gland.

The protein localises to the secreted. It is found in the target cell membrane. Functionally, shows cytolytic activity on many different cells by forming pore in lipid membranes. In vivo, increases heart rate or kills the animal by cardiac arrest. In addition, it binds to heparin with high affinity, interacts with Kv channel-interacting protein 1 (KCNIP1) in a calcium-independent manner, and binds to integrin alpha-V/beta-3 (ITGAV/ITGB3) with moderate affinity. The chain is Cytotoxin 2 from Naja annulifera (Banded Egyptian cobra).